Reading from the N-terminus, the 188-residue chain is Defensin-like protein 99 (188 aa).

A signal peptide spans 1 to 28 (MGSLKLSTVVVTALVVCLSILLISPTEA). 7 cysteine pairs are disulfide-bonded: C37–C95, C45–C77, C58–C92, C62–C94, C123–C178, C137–C175, and C141–C177.

Belongs to the DEFL family.

It localises to the secreted. The polypeptide is Defensin-like protein 99 (Arabidopsis thaliana (Mouse-ear cress)).